Consider the following 203-residue polypeptide: Outer-membrane lipoprotein carrier protein (203 aa).

A signal peptide spans 1 to 21 (MKKWLAISCLIAGVTSTAVYA).

The protein belongs to the LolA family. In terms of assembly, monomer.

It localises to the periplasm. Functionally, participates in the translocation of lipoproteins from the inner membrane to the outer membrane. Only forms a complex with a lipoprotein if the residue after the N-terminal Cys is not an aspartate (The Asp acts as a targeting signal to indicate that the lipoprotein should stay in the inner membrane). This chain is Outer-membrane lipoprotein carrier protein, found in Pectobacterium atrosepticum (strain SCRI 1043 / ATCC BAA-672) (Erwinia carotovora subsp. atroseptica).